Reading from the N-terminus, the 266-residue chain is Diphthine synthase (266 aa).

S-adenosyl-L-methionine is bound by residues Leu-9, Asp-84, Val-87, 112–113 (SI), Leu-169, Ala-210, and His-235.

It belongs to the diphthine synthase family. Homodimer.

The enzyme catalyses 2-[(3S)-amino-3-carboxypropyl]-L-histidyl-[translation elongation factor 2] + 3 S-adenosyl-L-methionine = diphthine-[translation elongation factor 2] + 3 S-adenosyl-L-homocysteine + 3 H(+). It functions in the pathway protein modification; peptidyl-diphthamide biosynthesis. In terms of biological role, S-adenosyl-L-methionine-dependent methyltransferase that catalyzes the trimethylation of the amino group of the modified target histidine residue in translation elongation factor 2 (EF-2), to form an intermediate called diphthine. The three successive methylation reactions represent the second step of diphthamide biosynthesis. This chain is Diphthine synthase, found in Methanosarcina acetivorans (strain ATCC 35395 / DSM 2834 / JCM 12185 / C2A).